Consider the following 840-residue polypeptide: Intracellular phospholipase A1 (840 aa).

Disordered regions lie at residues 1–142 and 666–718; these read MSGS…RRRK and KKNK…AANA. Residues 26-39 show a composition bias toward basic and acidic residues; it reads GKVKQKEKPKEKQM. Over residues 97–111 the composition is skewed to low complexity; that stretch reads SRPSGLPSNGNPGSS. One can recognise a DDHD domain in the interval 564–827; the sequence is LEFKVKYLFA…ALFLANVLYC (264 aa). Basic and acidic residues predominate over residues 668 to 680; the sequence is NKDDKTADARSGG. Over residues 681–694 the composition is skewed to acidic residues; the sequence is DDENEDEDECDSDE.

It belongs to the PA-PLA1 family.

The catalysed reaction is 1,2-dihexadecanoyl-sn-glycero-3-phospho-(1D-myo-inositol) + H2O = 2-hexadecanoyl-sn-glycero-3-phospho-(1D-myo-inositol) + hexadecanoate + H(+). It carries out the reaction a 1,2-diacyl-sn-glycero-3-phospho-L-serine + H2O = a 2-acyl-sn-glycero-3-phospho-L-serine + a fatty acid + H(+). It catalyses the reaction 1-hexadecanoyl-2-(9Z-octadecenoyl)-sn-glycero-3-phospho-L-serine + H2O = 2-(9Z-octadecenoyl)-sn-glycero-3-phospho-L-serine + hexadecanoate + H(+). The enzyme catalyses 1,2-di-(9Z-octadecenoyl)-sn-glycero-3-phosphocholine + H2O = (9Z-octadecenoyl)-sn-glycero-3-phosphocholine + (9Z)-octadecenoate + H(+). The catalysed reaction is a 1,2-diacyl-sn-glycero-3-phosphocholine + H2O = a 1-acyl-sn-glycero-3-phosphocholine + a fatty acid + H(+). It carries out the reaction 1,2-dihexadecanoyl-sn-glycero-3-phosphocholine + H2O = 1-hexadecanoyl-sn-glycero-3-phosphocholine + hexadecanoate + H(+). With respect to regulation, inhibited by E-6-bromomethylene-3-1-naphthalenyl-2H-tetrahydropyran-2-one (BEL) in vitro. In terms of biological role, hydrolyzes the ester bond at the sn-1 position of glycerophospholipids and produces 2-acyl lysophospholipids, being phosphatidylinositol (PI) its major substrate. PI is a versatile lipid that not only serves as a structural component of cellular membranes, but also plays important roles in signal transduction through distinct phosphorylated derivatives of the inositol head group. Catalyzes the hydrolysis of phosphatidylcholine at sn-2 position in vitro. Regulates asymmetric division, an important property of stem cells in C.elegans, by controlling the subcellular localizations of beta-catenin. In Caenorhabditis elegans, this protein is Intracellular phospholipase A1.